Consider the following 30-residue polypeptide: Dermonecrotic toxin LlSicTox-alphaIII-1 (30 aa).

Residue His-12 is part of the active site.

This sequence belongs to the arthropod phospholipase D family. Class I subfamily. The cofactor is Mg(2+). Contains 1 disulfide bond. In terms of tissue distribution, expressed by the venom gland.

The protein resides in the secreted. It catalyses the reaction an N-(acyl)-sphingosylphosphocholine = an N-(acyl)-sphingosyl-1,3-cyclic phosphate + choline. It carries out the reaction an N-(acyl)-sphingosylphosphoethanolamine = an N-(acyl)-sphingosyl-1,3-cyclic phosphate + ethanolamine. The catalysed reaction is a 1-acyl-sn-glycero-3-phosphocholine = a 1-acyl-sn-glycero-2,3-cyclic phosphate + choline. The enzyme catalyses a 1-acyl-sn-glycero-3-phosphoethanolamine = a 1-acyl-sn-glycero-2,3-cyclic phosphate + ethanolamine. Dermonecrotic toxins cleave the phosphodiester linkage between the phosphate and headgroup of certain phospholipids (sphingolipid and lysolipid substrates), forming an alcohol (often choline) and a cyclic phosphate. This toxin acts on sphingomyelin (SM). It may also act on ceramide phosphoethanolamine (CPE), lysophosphatidylcholine (LPC) and lysophosphatidylethanolamine (LPE), but not on lysophosphatidylserine (LPS), and lysophosphatidylglycerol (LPG). It acts by transphosphatidylation, releasing exclusively cyclic phosphate products as second products. In vivo, intradermal injection induces dermonecrosis. Induces hemolysis, increased vascular permeability, edema, inflammatory response, and platelet aggregation. This chain is Dermonecrotic toxin LlSicTox-alphaIII-1, found in Loxosceles laeta (South American recluse spider).